The chain runs to 387 residues: Odorant receptor 94a (387 aa).

The Cytoplasmic portion of the chain corresponds to 1–45 (MDKHKDRIESMRLILQVMQLFGLWPWSLKSEEEWTFTGFVKRNYR). The chain crosses the membrane as a helical span at residues 46-66 (FLLHLPITFTFIGLMWLEAFI). Over 67 to 75 (SSNLEQAGQ) the chain is Extracellular. A helical transmembrane segment spans residues 76–96 (VLYMSITEMALVVKILSIWHY). Residues 97–133 (RTEAWRLMYELQHAPDYQLHNQEEVDFWRREQRFFKW) lie on the Cytoplasmic side of the membrane. The helical transmembrane segment at 134–154 (FFYIYILISLGVVYSGCTGVL) threads the bilayer. Topologically, residues 155–191 (FLEGYELPFAYYVPFEWQNERRYWFAYGYDMAGMTLT) are extracellular. Residues 192 to 212 (CISNITLDTLGCYFLFHISLL) traverse the membrane as a helical segment. At 213–255 (YRLLGLRLRETKNMKNDTIFGQQLRAIFIMHQRIRSLTLTCQR) the chain is on the cytoplasmic side. Residues 256-276 (IVSPYILSQIILSALIICFSG) traverse the membrane as a helical segment. Residues 277–290 (YRLQHVGIRDNPGQ) are Extracellular-facing. Residues 291–311 (FISMLQFVSVMILQIYLPCYY) form a helical membrane-spanning segment. Over 312–362 (GNEITVYANQLTNEVYHTNWLECRPPIRKLLNAYMEHLKKPVTIRAGNFFA) the chain is Cytoplasmic. A helical membrane pass occupies residues 363–383 (VGLPIFVKTINNAYSFLALLL). An N-linked (GlcNAc...) asparagine glycan is attached at Asn384. Residues 384-387 (NVSN) are Extracellular-facing.

This sequence belongs to the insect chemoreceptor superfamily. Heteromeric odorant receptor channel (TC 1.A.69) family. Or2a subfamily. Interacts with Orco. Complexes exist early in the endomembrane system in olfactory sensory neurons (OSNs), coupling these complexes to the conserved ciliary trafficking pathway.

It is found in the cell membrane. Functionally, odorant receptor which mediates acceptance or avoidance behavior, depending on its substrates. The odorant receptor repertoire encodes a large collection of odor stimuli that vary widely in identity, intensity, and duration. May form a complex with Orco to form odorant-sensing units, providing sensitive and prolonged odorant signaling and calcium permeability. The chain is Odorant receptor 94a (Or94a) from Drosophila melanogaster (Fruit fly).